The following is a 76-amino-acid chain: Small ribosomal subunit protein bS18 (76 aa).

This sequence belongs to the bacterial ribosomal protein bS18 family. Part of the 30S ribosomal subunit. Forms a tight heterodimer with protein bS6.

Its function is as follows. Binds as a heterodimer with protein bS6 to the central domain of the 16S rRNA, where it helps stabilize the platform of the 30S subunit. The protein is Small ribosomal subunit protein bS18 of Brevibacillus brevis (strain 47 / JCM 6285 / NBRC 100599).